The following is a 124-amino-acid chain: UPF0299 membrane protein VIBHAR_02118 (124 aa).

A run of 4 helical transmembrane segments spans residues 6–26 (LLQL…LGIG), 35–55 (VSVP…TLGL), 72–92 (MILL…MLLA), and 95–115 (LPII…LAWF).

The protein belongs to the UPF0299 family.

It is found in the cell inner membrane. This is UPF0299 membrane protein VIBHAR_02118 from Vibrio campbellii (strain ATCC BAA-1116).